A 475-amino-acid polypeptide reads, in one-letter code: Putative poly(A) polymerase catalytic subunit (475 aa).

It belongs to the poxviridae poly(A) polymerase catalytic subunit family. Highly divergent.

The protein localises to the virion. It catalyses the reaction RNA(n) + ATP = RNA(n)-3'-adenine ribonucleotide + diphosphate. Functionally, polymerase that creates the 3'-poly(A) tail of mRNAs. The protein is Putative poly(A) polymerase catalytic subunit of Ornithodoros (relapsing fever ticks).